Consider the following 254-residue polypeptide: uncharacterized protein (254 aa).

This sequence belongs to the MtxX family.

This is an uncharacterized protein from Methanopyrus kandleri (strain AV19 / DSM 6324 / JCM 9639 / NBRC 100938).